The following is a 317-amino-acid chain: Glutathione synthetase (317 aa).

One can recognise an ATP-grasp domain in the interval 125–311; the sequence is EKMFATLFPQ…IGGKLMDAID (187 aa). 152–208 is an ATP binding site; sequence TAKHADVILKPLDGMGGTSIFRHRAGDPNLSVILETLTALGTQQIMAQAYLPAIKDG. Mg(2+) is bound by residues glutamate 282 and asparagine 284.

Belongs to the prokaryotic GSH synthase family. Mg(2+) serves as cofactor. It depends on Mn(2+) as a cofactor.

The catalysed reaction is gamma-L-glutamyl-L-cysteine + glycine + ATP = glutathione + ADP + phosphate + H(+). It participates in sulfur metabolism; glutathione biosynthesis; glutathione from L-cysteine and L-glutamate: step 2/2. This is Glutathione synthetase from Pseudomonas putida (strain ATCC 47054 / DSM 6125 / CFBP 8728 / NCIMB 11950 / KT2440).